Consider the following 52-residue polypeptide: uncharacterized protein (52 aa).

The disordered stretch occupies residues 1–52 (MFGFIYRDPSPAPQGKIRDGSKDPKTPGGGGGGGGGISPNGGAPLGGKGFSM). Basic and acidic residues predominate over residues 16-25 (KIRDGSKDPK). The span at 27-52 (PGGGGGGGGGISPNGGAPLGGKGFSM) shows a compositional bias: gly residues.

This is an uncharacterized protein from Dictyostelium discoideum (Social amoeba).